A 489-amino-acid chain; its full sequence is Rhamnulokinase (489 aa).

13-17 (ASSGR) is a binding site for ATP. A disulfide bridge links Cys-68 with Cys-222. Substrate contacts are provided by residues Gly-83 and 236-238 (HDT). The active-site Proton acceptor is Asp-237. Thr-259 serves as a coordination point for ATP. Asn-296 is a binding site for substrate. Residue Gln-304 coordinates ATP. Cys-353 and Cys-370 are disulfide-bonded. An ATP-binding site is contributed by Gly-402. The cysteines at positions 413 and 417 are disulfide-linked.

This sequence belongs to the rhamnulokinase family. Mg(2+) serves as cofactor.

The catalysed reaction is L-rhamnulose + ATP = L-rhamnulose 1-phosphate + ADP + H(+). It functions in the pathway carbohydrate degradation; L-rhamnose degradation; glycerone phosphate from L-rhamnose: step 2/3. Involved in the catabolism of L-rhamnose (6-deoxy-L-mannose). Catalyzes the transfer of the gamma-phosphate group from ATP to the 1-hydroxyl group of L-rhamnulose to yield L-rhamnulose 1-phosphate. In Salmonella choleraesuis (strain SC-B67), this protein is Rhamnulokinase.